A 51-amino-acid chain; its full sequence is Insulin (51 aa).

Disulfide bonds link C7–C37, C19–C50, and C36–C41.

Belongs to the insulin family. In terms of assembly, heterodimer of a B chain and an A chain linked by two disulfide bonds.

It localises to the secreted. Functionally, insulin decreases blood glucose concentration. It increases cell permeability to monosaccharides, amino acids and fatty acids. It accelerates glycolysis, the pentose phosphate cycle, and glycogen synthesis in liver. This chain is Insulin (INS), found in Acomys cahirinus (Cairo spiny mouse).